The sequence spans 258 residues: Acetylglutamate kinase (258 aa).

Residues 44-45, Arg66, and Asn158 each bind substrate; that span reads GG. Residues 181-186 and 209-211 each bind ATP; these read DISSIL and IIT.

Belongs to the acetylglutamate kinase family. ArgB subfamily. As to quaternary structure, homodimer.

The protein resides in the cytoplasm. It catalyses the reaction N-acetyl-L-glutamate + ATP = N-acetyl-L-glutamyl 5-phosphate + ADP. It participates in amino-acid biosynthesis; L-arginine biosynthesis; N(2)-acetyl-L-ornithine from L-glutamate: step 2/4. Its function is as follows. Catalyzes the ATP-dependent phosphorylation of N-acetyl-L-glutamate. This is Acetylglutamate kinase from Buchnera aphidicola subsp. Schizaphis graminum (strain Sg).